The primary structure comprises 212 residues: Thymidylate kinase (212 aa).

7–14 (GGEGCGKT) contributes to the ATP binding site.

It belongs to the thymidylate kinase family.

The catalysed reaction is dTMP + ATP = dTDP + ADP. Phosphorylation of dTMP to form dTDP in both de novo and salvage pathways of dTTP synthesis. The protein is Thymidylate kinase of Gloeobacter violaceus (strain ATCC 29082 / PCC 7421).